The sequence spans 374 residues: Putative glutamate--cysteine ligase 2-1 (374 aa).

The protein belongs to the glutamate--cysteine ligase type 2 family. YbdK subfamily.

The enzyme catalyses L-cysteine + L-glutamate + ATP = gamma-L-glutamyl-L-cysteine + ADP + phosphate + H(+). In terms of biological role, ATP-dependent carboxylate-amine ligase which exhibits weak glutamate--cysteine ligase activity. This Saccharopolyspora erythraea (strain ATCC 11635 / DSM 40517 / JCM 4748 / NBRC 13426 / NCIMB 8594 / NRRL 2338) protein is Putative glutamate--cysteine ligase 2-1.